Here is a 216-residue protein sequence, read N- to C-terminus: Adenylate kinase (216 aa).

10 to 15 is an ATP binding site; it reads GAGKGT. The interval 30 to 59 is NMP; it reads STGDIFRKNISENTPLGIEAKGYIDNGQLV. Residues threonine 31, arginine 36, 57-59, 85-88, and glutamine 92 contribute to the AMP site; these read QLV and GFPR. Residues 126–163 are LID; the sequence is GRRVCPSCGASYHVKFNPPTNEGKCDLCGSEVIQRKDD. Arginine 127 is a binding site for ATP. The Zn(2+) site is built by cysteine 130 and cysteine 133. 136 to 137 serves as a coordination point for ATP; that stretch reads SY. The Zn(2+) site is built by cysteine 150 and cysteine 153. AMP is bound by residues arginine 160 and arginine 171. Lysine 199 contributes to the ATP binding site.

It belongs to the adenylate kinase family. As to quaternary structure, monomer.

It is found in the cytoplasm. It catalyses the reaction AMP + ATP = 2 ADP. Its pathway is purine metabolism; AMP biosynthesis via salvage pathway; AMP from ADP: step 1/1. Its function is as follows. Catalyzes the reversible transfer of the terminal phosphate group between ATP and AMP. Plays an important role in cellular energy homeostasis and in adenine nucleotide metabolism. In Clostridium beijerinckii (strain ATCC 51743 / NCIMB 8052) (Clostridium acetobutylicum), this protein is Adenylate kinase.